The chain runs to 156 residues: Small ribosomal subunit protein uS7 (156 aa).

Belongs to the universal ribosomal protein uS7 family. As to quaternary structure, part of the 30S ribosomal subunit. Contacts proteins S9 and S11.

In terms of biological role, one of the primary rRNA binding proteins, it binds directly to 16S rRNA where it nucleates assembly of the head domain of the 30S subunit. Is located at the subunit interface close to the decoding center, probably blocks exit of the E-site tRNA. This Buchnera aphidicola subsp. Baizongia pistaciae (strain Bp) protein is Small ribosomal subunit protein uS7.